Here is a 281-residue protein sequence, read N- to C-terminus: NADPH-dependent 7-cyano-7-deazaguanine reductase (281 aa).

87–89 (IES) contacts substrate. 89–90 (SK) is an NADPH binding site. The active-site Thioimide intermediate is the Cys-188. Asp-195 serves as the catalytic Proton donor. A substrate-binding site is contributed by 227–228 (HE). Position 256-257 (256-257 (RG)) interacts with NADPH. Residues 261–281 (INPYRSTEQDKPAHNNRMARQ) form a disordered region.

It belongs to the GTP cyclohydrolase I family. QueF type 2 subfamily. As to quaternary structure, homodimer.

It is found in the cytoplasm. It carries out the reaction 7-aminomethyl-7-carbaguanine + 2 NADP(+) = 7-cyano-7-deazaguanine + 2 NADPH + 3 H(+). Its pathway is tRNA modification; tRNA-queuosine biosynthesis. Catalyzes the NADPH-dependent reduction of 7-cyano-7-deazaguanine (preQ0) to 7-aminomethyl-7-deazaguanine (preQ1). This is NADPH-dependent 7-cyano-7-deazaguanine reductase from Vibrio campbellii (strain ATCC BAA-1116).